Reading from the N-terminus, the 186-residue chain is Ribosome-recycling factor (186 aa).

It belongs to the RRF family.

It localises to the cytoplasm. Its function is as follows. Responsible for the release of ribosomes from messenger RNA at the termination of protein biosynthesis. May increase the efficiency of translation by recycling ribosomes from one round of translation to another. This Cupriavidus metallidurans (strain ATCC 43123 / DSM 2839 / NBRC 102507 / CH34) (Ralstonia metallidurans) protein is Ribosome-recycling factor.